A 596-amino-acid chain; its full sequence is Ferredoxin--nitrite reductase, chloroplastic (596 aa).

A chloroplast-targeting transit peptide spans 1–28 (MASSASLQRFLPPYPHAAASRCRPPGVR). A disordered region spans residues 1–56 (MASSASLQRFLPPYPHAAASRCRPPGVRARPVQSSTVSAPSSSTPAADEAVSAERL). The segment covering 31–47 (PVQSSTVSAPSSSTPAA) has biased composition (low complexity). C474, C480, C515, and C519 together coordinate [4Fe-4S] cluster. Residue C519 participates in siroheme binding.

The protein belongs to the nitrite and sulfite reductase 4Fe-4S domain family. In terms of assembly, monomer. Siroheme serves as cofactor. It depends on [4Fe-4S] cluster as a cofactor.

The protein resides in the plastid. It is found in the chloroplast. It catalyses the reaction 6 oxidized [2Fe-2S]-[ferredoxin] + NH4(+) + 2 H2O = nitrite + 6 reduced [2Fe-2S]-[ferredoxin] + 8 H(+). Its pathway is nitrogen metabolism; nitrate reduction (assimilation). Its function is as follows. Catalyzes the six-electron reduction of nitrite to ammonium. The polypeptide is Ferredoxin--nitrite reductase, chloroplastic (Oryza sativa subsp. japonica (Rice)).